The primary structure comprises 255 residues: Arginine-binding extracellular protein ArtP (255 aa).

The N-terminal stretch at 1–19 (MKKWLLLLVAACITFALTA) is a signal peptide. Cysteine 20 is lipidated: N-palmitoyl cysteine. Residue cysteine 20 is the site of S-diacylglycerol cysteine attachment.

This sequence belongs to the bacterial solute-binding protein 3 family.

The protein resides in the cell membrane. Part of a binding-protein-dependent transport system for arginine. This is Arginine-binding extracellular protein ArtP (artP) from Bacillus subtilis (strain 168).